The following is a 173-amino-acid chain: RxLR effector protein PITG_10232 (173 aa).

An N-terminal signal peptide occupies residues 1–24; the sequence is MRLGYLIVGCAVALLATTDGVVDA. A disordered region spans residues 25 to 64; it reads SSKHKQLSTDVPRPADDISSERFLRSQDTPEDDGNPAHED. A compositionally biased stretch (basic and acidic residues) spans 37 to 49; sequence RPADDISSERFLR. The RxLR-dEER motif lies at 46–65; it reads RFLRSQDTPEDDGNPAHEDR.

The protein belongs to the RxLR effector family.

The protein resides in the secreted. Its subcellular location is the host nucleus. The protein localises to the host cytoplasm. Functionally, effector that leads to host programmed cell death. The chain is RxLR effector protein PITG_10232 from Phytophthora infestans (strain T30-4) (Potato late blight agent).